Consider the following 323-residue polypeptide: Cytosolic sulfotransferase 5 (323 aa).

A 3'-phosphoadenylyl sulfate-binding site is contributed by 69-74 (KCGTTW). The Proton acceptor role is filled by H135. Residues R157, S165, and 289–291 (RKG) contribute to the 3'-phosphoadenylyl sulfate site.

It belongs to the sulfotransferase 1 family. As to expression, expressed in inflorescence stems, roots and siliques.

The protein localises to the cytoplasm. Functionally, sulfotransferase that utilizes 3'-phospho-5'-adenylyl sulfate (PAPS) as sulfonate donor to specifically catalyze the sulfate conjugation of flavones and flavonols. Strictly specific for the position 7. Substrate preference is kaempferol 3-sulfate &gt; isorhamnetin &gt; kaempferol. The sequence is that of Cytosolic sulfotransferase 5 (SOT5) from Arabidopsis thaliana (Mouse-ear cress).